We begin with the raw amino-acid sequence, 183 residues long: ATP-dependent protease subunit HslV (183 aa).

Residue Thr13 is part of the active site. 3 residues coordinate Na(+): Gly168, Cys171, and Thr174.

This sequence belongs to the peptidase T1B family. HslV subfamily. In terms of assembly, a double ring-shaped homohexamer of HslV is capped on each side by a ring-shaped HslU homohexamer. The assembly of the HslU/HslV complex is dependent on binding of ATP.

The protein resides in the cytoplasm. The enzyme catalyses ATP-dependent cleavage of peptide bonds with broad specificity.. Its activity is regulated as follows. Allosterically activated by HslU binding. Protease subunit of a proteasome-like degradation complex believed to be a general protein degrading machinery. In Xanthomonas axonopodis pv. citri (strain 306), this protein is ATP-dependent protease subunit HslV.